Reading from the N-terminus, the 199-residue chain is Recombination protein RecR (199 aa).

The C4-type zinc finger occupies 57–72; the sequence is CEICGNMDTENICRIC. In terms of domain architecture, Toprim spans 80-175; it reads SVIAIVETVA…KISRLASGIP (96 aa).

This sequence belongs to the RecR family.

May play a role in DNA repair. It seems to be involved in an RecBC-independent recombinational process of DNA repair. It may act with RecF and RecO. This is Recombination protein RecR from Rickettsia canadensis (strain McKiel).